Reading from the N-terminus, the 503-residue chain is V-type proton ATPase subunit B (503 aa).

Arginine 378 contributes to the ATP binding site. 4 positions are modified to phosphoserine: serine 491, serine 492, serine 502, and serine 503.

It belongs to the ATPase alpha/beta chains family. In terms of assembly, V-ATPase is a heteromultimeric enzyme composed of a peripheral catalytic V1 complex (components A to H) attached to an integral membrane V0 proton pore complex (components: a, c, c', c'', d, e, f and VOA1). Interacts with rav1.

Its subcellular location is the vacuole membrane. Functionally, non-catalytic subunit of the V1 complex of vacuolar(H+)-ATPase (V-ATPase), a multisubunit enzyme composed of a peripheral complex (V1) that hydrolyzes ATP and a membrane integral complex (V0) that translocates protons. V-ATPase is responsible for acidifying and maintaining the pH of intracellular compartments. The protein is V-type proton ATPase subunit B of Schizosaccharomyces pombe (strain 972 / ATCC 24843) (Fission yeast).